A 325-amino-acid chain; its full sequence is NADH-quinone oxidoreductase subunit H (325 aa).

8 helical membrane-spanning segments follow: residues 11-31, 81-101, 114-134, 154-174, 186-206, 237-257, 265-285, and 304-324; these read ILIS…CGAF, AIFT…FAIV, IGIL…LFAG, LSYE…VGSF, VWNV…GVAV, FFVG…TLFF, LPPF…FILI, and VCLP…LYNA.

Belongs to the complex I subunit 1 family. In terms of assembly, NDH-1 is composed of 13 different subunits. Subunits NuoA, H, J, K, L, M, N constitute the membrane sector of the complex.

The protein resides in the cell inner membrane. It carries out the reaction a quinone + NADH + 5 H(+)(in) = a quinol + NAD(+) + 4 H(+)(out). Functionally, NDH-1 shuttles electrons from NADH, via FMN and iron-sulfur (Fe-S) centers, to quinones in the respiratory chain. The immediate electron acceptor for the enzyme in this species is believed to be ubiquinone. Couples the redox reaction to proton translocation (for every two electrons transferred, four hydrogen ions are translocated across the cytoplasmic membrane), and thus conserves the redox energy in a proton gradient. This subunit may bind ubiquinone. The chain is NADH-quinone oxidoreductase subunit H from Yersinia pseudotuberculosis serotype O:3 (strain YPIII).